Consider the following 201-residue polypeptide: Recombination protein RecR (201 aa).

The C4-type zinc finger occupies 60 to 75 (CSVCGNIDTTDPCSIC). In terms of domain architecture, Toprim spans 83–178 (GTIIVVEDIS…KITRLAHGVP (96 aa)).

The protein belongs to the RecR family.

In terms of biological role, may play a role in DNA repair. It seems to be involved in an RecBC-independent recombinational process of DNA repair. It may act with RecF and RecO. This Bartonella bacilliformis (strain ATCC 35685 / KC583 / Herrer 020/F12,63) protein is Recombination protein RecR.